The chain runs to 273 residues: 4-hydroxy-tetrahydrodipicolinate reductase (273 aa).

Residues 12–17 and glutamate 38 contribute to the NAD(+) site; that span reads GAGGRM. Arginine 39 provides a ligand contact to NADP(+). NAD(+)-binding positions include 102–104 and 126–129; these read GTT and AANF. Histidine 159 acts as the Proton donor/acceptor in catalysis. Histidine 160 contributes to the (S)-2,3,4,5-tetrahydrodipicolinate binding site. Lysine 163 serves as the catalytic Proton donor. 169-170 serves as a coordination point for (S)-2,3,4,5-tetrahydrodipicolinate; that stretch reads GT.

It belongs to the DapB family. Homotetramer.

It is found in the cytoplasm. The enzyme catalyses (S)-2,3,4,5-tetrahydrodipicolinate + NAD(+) + H2O = (2S,4S)-4-hydroxy-2,3,4,5-tetrahydrodipicolinate + NADH + H(+). The catalysed reaction is (S)-2,3,4,5-tetrahydrodipicolinate + NADP(+) + H2O = (2S,4S)-4-hydroxy-2,3,4,5-tetrahydrodipicolinate + NADPH + H(+). Its pathway is amino-acid biosynthesis; L-lysine biosynthesis via DAP pathway; (S)-tetrahydrodipicolinate from L-aspartate: step 4/4. Catalyzes the conversion of 4-hydroxy-tetrahydrodipicolinate (HTPA) to tetrahydrodipicolinate. In Salmonella arizonae (strain ATCC BAA-731 / CDC346-86 / RSK2980), this protein is 4-hydroxy-tetrahydrodipicolinate reductase.